Reading from the N-terminus, the 312-residue chain is Olfactory receptor-like protein COR4 (312 aa).

Residues M1–P26 lie on the Extracellular side of the membrane. The N-linked (GlcNAc...) asparagine glycan is linked to N5. A helical transmembrane segment spans residues L27–I49. Over S50–T57 the chain is Cytoplasmic. A helical membrane pass occupies residues P58–P79. At K80 to Q100 the chain is on the extracellular side. Cysteines 97 and 179 form a disulfide. The chain crosses the membrane as a helical span at residues Y101–Y120. Residues D121–A139 are Cytoplasmic-facing. The chain crosses the membrane as a helical span at residues V140 to L164. Residues K165–L205 lie on the Extracellular side of the membrane. The chain crosses the membrane as a helical span at residues F206 to V226. Residues R227–S239 lie on the Cytoplasmic side of the membrane. Residues T240–L260 traverse the membrane as a helical segment. The Extracellular portion of the chain corresponds to R261–D271. A helical transmembrane segment spans residues K272 to W292. At R293–H312 the chain is on the cytoplasmic side.

This sequence belongs to the G-protein coupled receptor 1 family.

The protein resides in the cell membrane. Odorant receptor. This is Olfactory receptor-like protein COR4 (COR4) from Gallus gallus (Chicken).